Here is a 55-residue protein sequence, read N- to C-terminus: uncharacterized protein (55 aa).

Helical transmembrane passes span 5-25 and 26-46; these read LISI…MMHM and LPLY…LYRL.

It is found in the cell membrane. This is an uncharacterized protein from Bacillus subtilis (strain 168).